We begin with the raw amino-acid sequence, 361 residues long: 5-formaminoimidazole-4-carboxamide-1-(beta)-D-ribofuranosyl 5'-monophosphate synthetase (361 aa).

5-amino-1-(5-phospho-beta-D-ribosyl)imidazole-4-carboxamide-binding residues include His-27 and Ser-94. The ATP-grasp domain maps to 116–348 (RAILRWEAER…MGQRIAREIK (233 aa)). Residues 146 to 208 (PDDI…ANYC) and Glu-230 contribute to the ATP site. Asn-258 is a binding site for 5-amino-1-(5-phospho-beta-D-ribosyl)imidazole-4-carboxamide. Gln-297 and Glu-310 together coordinate Mg(2+).

The protein belongs to the phosphohexose mutase family. It depends on Mg(2+) as a cofactor. The cofactor is Mn(2+).

It carries out the reaction 5-amino-1-(5-phospho-beta-D-ribosyl)imidazole-4-carboxamide + formate + ATP = 5-formamido-1-(5-phospho-D-ribosyl)imidazole-4-carboxamide + ADP + phosphate. It participates in purine metabolism; IMP biosynthesis via de novo pathway; 5-formamido-1-(5-phospho-D-ribosyl)imidazole-4-carboxamide from 5-amino-1-(5-phospho-D-ribosyl)imidazole-4-carboxamide (formate route): step 1/1. Functionally, catalyzes the ATP- and formate-dependent formylation of 5-aminoimidazole-4-carboxamide-1-beta-d-ribofuranosyl 5'-monophosphate (AICAR) to 5-formaminoimidazole-4-carboxamide-1-beta-d-ribofuranosyl 5'-monophosphate (FAICAR) in the absence of folates. In Methanococcus maripaludis (strain C7 / ATCC BAA-1331), this protein is 5-formaminoimidazole-4-carboxamide-1-(beta)-D-ribofuranosyl 5'-monophosphate synthetase.